A 293-amino-acid polypeptide reads, in one-letter code: MSSSITPSLIAADLFSVDGLVAVVTGGATGIGLMIVKALEENGAKVYIIGRRKEVLDKVAKEEAKHGNIIPLQGDASSKPDLERIVAHITKETGYINLLVANAGISGPDPVRITPSTTLSELQRDLWSLDPSIFAQTFSVNVGTAYFSIAAFLPLLDAGNHKGNVVQSSQAIITSSIGAFGRVPLAHYAYSASKAAVTHMTKQFATALTKYKIRFNILAPGLYPSEMTAGIVKSFEQLSPEERATRVSPLGREGNTEDMAGCILWLASKAGAWLSGNVVVSDGGKLSVTPSSY.

Positions 31 and 102 each coordinate NADP(+). The active-site Proton donor is the S175. Residues Y190, K194, and S225 each coordinate NADP(+). Catalysis depends on Y190, which acts as the Proton acceptor. K194 functions as the Lowers pKa of active site Tyr in the catalytic mechanism.

Belongs to the short-chain dehydrogenases/reductases (SDR) family.

Its function is as follows. Short-chain dehydrogenase/reductase; part of the gene cluster that mediates the biosynthesis of the phomopsins, a group of hexapeptide mycotoxins which infects lupins and causes lupinosis disease in livestock. The role of phomF within the phomopsins biosynthesis pathway has still to be determined. The pathway starts with the processing of the precursor phomA by several endopeptidases including kexin proteases as well as the cluster-specific S41 family peptidase phomP1 and the oligopeptidase phomG to produce 10 identical copies of the hexapeptide Tyr-Val-Ile-Pro-Ile-Asp. After being excised from the precursor peptide, the core peptides are cyclized and modified post-translationally by enzymes encoded within the gene cluster. The timing and order of proteolysis of the phomA precursor and PTMs are still unknown. Two tyrosinase-like enzymes, phomQ1 and phomQ2, catalyze the chlorination and hydroxylation of Tyr, respectively. PhomYb, is proposed to be involved in the construction of the macrocyclic structure. The other 4 ustYa family proteins may be involved in PTMs that generate the unique structure of phomopsin A. PhomYa is required for the hydroxylation of C-beta of Tyr. PhomYc, phomYd, and phomYe are responsible for the biosynthesis of 2,3-dehydroisoleucine (dIle), 2,3-dehydroaspartic acid (dAsp), and 3,4-dehydroproline (dPro), respectively. While dIle formation by phomYc is indispensable for the installation of dAsp by phomYd, the order of the other PTMs have not been elucidated yet. Most of the biosynthetic enzymes likely have broad substrate specificity, and thus, there might be a metabolic grid from a precursor to phomopsin A. The enzyme(s) responsible for the biosynthesis of 3,4-dehydrovaline (dVal) have also not been identified yet. Finally, phomM acts as an S-adenosylmethionine-dependent alpha-N-methyltransferase that catalyzes two successive N-methylation reactions, converting N-desmethyl-phomopsin A to phomopsin A and phomopsin A further to an N,N-dimethylated congener called phomopsin E. This is Short-chain dehydrogenase/reductase PhomF from Diaporthe leptostromiformis (Lupinosis disease fungus).